The primary structure comprises 536 residues: Plasmepsin V (536 aa).

Residues Met-1–Gly-34 form the signal peptide. Topologically, residues Arg-35–Pro-492 are lumenal. Residues Tyr-62–Val-462 enclose the Peptidase A1 domain. Residue Asp-80 is part of the active site. Cystine bridges form between Cys-90-Cys-172, Cys-93-Cys-96, Cys-117-Cys-128, Cys-122-Cys-133, Cys-220-Cys-466, Cys-337-Cys-382, and Cys-391-Cys-427. Low complexity predominate over residues Ser-244 to Ser-258. The tract at residues Ser-244 to Glu-264 is disordered. Asp-313 is a catalytic residue. The chain crosses the membrane as a helical span at residues Phe-493–Phe-513. The Cytoplasmic segment spans residues Tyr-514 to Ala-536.

Belongs to the peptidase A1 family. In terms of assembly, component of a complex composed of SPC25 and PMV; the interaction is mediated via the transmembrane domains. The complex interacts with the SEC61 channel-forming translocon complex and is involved in the recognition and import of PEXEL motif-containing proteins into the ER for subsequent export. It is not clear if the zymogen has a cleavable propeptide. Cleavage of the putative propeptide is dispensable for catalytic activity.

The protein resides in the endoplasmic reticulum membrane. Its activity is regulated as follows. Inhibited by peptidomimetic inhibitors such as WEHI-842. In terms of biological role, during the asexual blood stage, plays an essential role in the export of several proteins into the host erythrocytes by cleaving the pentameric localization motif RxLxE/Q/D (termed Plasmodium export element (PEXEL)) located downstream of the N-terminal secretory signal sequence. Specifically, cleaves after the leucine residue in the RxLxE/Q/D (or RxLxxE) motif of exported proteins including EMP1. Also, by regulating protein export, plays an essential role in gametocyte development and thus parasite transmission to the mosquito vector. This is Plasmepsin V from Plasmodium vivax (strain Salvador I).